A 233-amino-acid chain; its full sequence is Protein TIPIN homolog (233 aa).

The span at 1–14 shows a compositional bias: acidic residues; the sequence is MDEMEDFFENDELD. 2 disordered regions span residues 1–39 and 134–233; these read MDEM…RVVE and GETG…NNDW. Basic and acidic residues-rich tracts occupy residues 163–190 and 197–216; these read DLFK…KTAE and EEYR…AKEA. Positions 217–227 are enriched in acidic residues; that stretch reads ADEDALMEDFG.

Belongs to the CSM3 family.

It is found in the cytoplasm. The protein resides in the nucleus. Functionally, required for normal progression of S-phase. Important for cell survival after DNA damage or replication stress. The sequence is that of Protein TIPIN homolog from Caenorhabditis elegans.